A 375-amino-acid polypeptide reads, in one-letter code: Succinyl-diaminopimelate desuccinylase (375 aa).

H66 serves as a coordination point for Zn(2+). Residue D68 is part of the active site. A Zn(2+)-binding site is contributed by D99. The Proton acceptor role is filled by E133. Residues E134, E162, and H348 each coordinate Zn(2+).

This sequence belongs to the peptidase M20A family. DapE subfamily. As to quaternary structure, homodimer. It depends on Zn(2+) as a cofactor. The cofactor is Co(2+).

The catalysed reaction is N-succinyl-(2S,6S)-2,6-diaminopimelate + H2O = (2S,6S)-2,6-diaminopimelate + succinate. Its pathway is amino-acid biosynthesis; L-lysine biosynthesis via DAP pathway; LL-2,6-diaminopimelate from (S)-tetrahydrodipicolinate (succinylase route): step 3/3. Catalyzes the hydrolysis of N-succinyl-L,L-diaminopimelic acid (SDAP), forming succinate and LL-2,6-diaminopimelate (DAP), an intermediate involved in the bacterial biosynthesis of lysine and meso-diaminopimelic acid, an essential component of bacterial cell walls. The sequence is that of Succinyl-diaminopimelate desuccinylase from Herminiimonas arsenicoxydans.